The following is a 553-amino-acid chain: Aminotransferase FUM8 (553 aa).

Positions 1-25 (MSPAPAILALRRVYNFCLLVDEAHG) are cleaved as a signal peptide. Residue asparagine 480 is glycosylated (N-linked (GlcNAc...) asparagine).

This sequence belongs to the class-II pyridoxal-phosphate-dependent aminotransferase family. BioF subfamily. It depends on pyridoxal 5'-phosphate as a cofactor.

Its subcellular location is the endoplasmic reticulum. The protein operates within mycotoxin biosynthesis. Aminotransferase; part of the gene cluster that mediates the biosynthesis of fumonisins B1 (FB1), B2 (FB2), B3 (FB3), and B4 (FB4), which are carcinogenic mycotoxins. Within the pathway, FUM8 catalyzes the release of the C-18 polyketide chain from the highly reducing polyketide synthase FUM1 by a nucleophilic attack of a carbanion, which is derived from R-carbon of alanine by decarboxylation, on the carbonyl carbon of polyketide acyl chain. The biosynthesis starts with the FUM1-catalyzed carbon chain assembly from one molecule of acetyl-CoA, eight molecules of malonyl-CoA, and two molecules of methionine (in S-adenosyl form). The C18 polyketide chain is released from the enzyme by a nucleophilic attack of a carbanion, which is derived from R-carbon of alanine by decarboxylation, on the carbonyl carbon of polyketide acyl chain. This step is catalyzed by the pyridoxal 5'-phosphate-dependent aminoacyl transferase FUM8. The resultant 3-keto intermediate is then stereospecifically reduced to a 3-hydroxyl product by reductase FUM13. Subsequent oxidations at C-10 by the cytochrome P450 monooxygenase FUM2, C-14 and C-15 by FUM6, FUM12 or FUM15, tricarballylic esterification of the hydroxyl groups on C-14 and C-15 by acyltransferase FUM14, and C-5 hydroxylation by 2-keto-glutarate-dependent dioxygenase FUM3 furnish the biosynthesis of fumonisins. The tricarballylic moieties are most likely derived from the citric acid cycle, and their addition to the carbon backbone may involve FUM7, FUM10, FUM11 and FUM14. The chain is Aminotransferase FUM8 from Gibberella moniliformis (strain M3125 / FGSC 7600) (Maize ear and stalk rot fungus).